The chain runs to 416 residues: Serine hydroxymethyltransferase (416 aa).

(6S)-5,6,7,8-tetrahydrofolate-binding positions include L118 and 122-124 (GHL). Residue K226 is modified to N6-(pyridoxal phosphate)lysine. E242 serves as a coordination point for (6S)-5,6,7,8-tetrahydrofolate.

Belongs to the SHMT family. As to quaternary structure, homodimer. Requires pyridoxal 5'-phosphate as cofactor.

The protein resides in the cytoplasm. It catalyses the reaction (6R)-5,10-methylene-5,6,7,8-tetrahydrofolate + glycine + H2O = (6S)-5,6,7,8-tetrahydrofolate + L-serine. It functions in the pathway one-carbon metabolism; tetrahydrofolate interconversion. Its pathway is amino-acid biosynthesis; glycine biosynthesis; glycine from L-serine: step 1/1. In terms of biological role, catalyzes the reversible interconversion of serine and glycine with tetrahydrofolate (THF) serving as the one-carbon carrier. This reaction serves as the major source of one-carbon groups required for the biosynthesis of purines, thymidylate, methionine, and other important biomolecules. Also exhibits THF-independent aldolase activity toward beta-hydroxyamino acids, producing glycine and aldehydes, via a retro-aldol mechanism. The polypeptide is Serine hydroxymethyltransferase (Helicobacter pylori (strain HPAG1)).